The primary structure comprises 320 residues: Aspartate carbamoyltransferase catalytic subunit (320 aa).

The carbamoyl phosphate site is built by arginine 57 and threonine 58. Lysine 85 lines the L-aspartate pocket. The carbamoyl phosphate site is built by arginine 107, histidine 141, and glutamine 144. Arginine 174 and arginine 228 together coordinate L-aspartate. Carbamoyl phosphate-binding residues include glycine 269 and proline 270.

The protein belongs to the aspartate/ornithine carbamoyltransferase superfamily. ATCase family. Heterododecamer (2C3:3R2) of six catalytic PyrB chains organized as two trimers (C3), and six regulatory PyrI chains organized as three dimers (R2).

The enzyme catalyses carbamoyl phosphate + L-aspartate = N-carbamoyl-L-aspartate + phosphate + H(+). It functions in the pathway pyrimidine metabolism; UMP biosynthesis via de novo pathway; (S)-dihydroorotate from bicarbonate: step 2/3. Its function is as follows. Catalyzes the condensation of carbamoyl phosphate and aspartate to form carbamoyl aspartate and inorganic phosphate, the committed step in the de novo pyrimidine nucleotide biosynthesis pathway. The sequence is that of Aspartate carbamoyltransferase catalytic subunit from Mycobacterium ulcerans (strain Agy99).